The following is a 166-amino-acid chain: Crossover junction endodeoxyribonuclease RuvC (166 aa).

Residues D11, E70, and D142 contribute to the active site. 3 residues coordinate Mg(2+): D11, E70, and D142.

The protein belongs to the RuvC family. In terms of assembly, homodimer which binds Holliday junction (HJ) DNA. The HJ becomes 2-fold symmetrical on binding to RuvC with unstacked arms; it has a different conformation from HJ DNA in complex with RuvA. In the full resolvosome a probable DNA-RuvA(4)-RuvB(12)-RuvC(2) complex forms which resolves the HJ. Requires Mg(2+) as cofactor.

It localises to the cytoplasm. The catalysed reaction is Endonucleolytic cleavage at a junction such as a reciprocal single-stranded crossover between two homologous DNA duplexes (Holliday junction).. In terms of biological role, the RuvA-RuvB-RuvC complex processes Holliday junction (HJ) DNA during genetic recombination and DNA repair. Endonuclease that resolves HJ intermediates. Cleaves cruciform DNA by making single-stranded nicks across the HJ at symmetrical positions within the homologous arms, yielding a 5'-phosphate and a 3'-hydroxyl group; requires a central core of homology in the junction. The consensus cleavage sequence is 5'-(A/T)TT(C/G)-3'. Cleavage occurs on the 3'-side of the TT dinucleotide at the point of strand exchange. HJ branch migration catalyzed by RuvA-RuvB allows RuvC to scan DNA until it finds its consensus sequence, where it cleaves and resolves the cruciform DNA. The protein is Crossover junction endodeoxyribonuclease RuvC of Nitratidesulfovibrio vulgaris (strain ATCC 29579 / DSM 644 / CCUG 34227 / NCIMB 8303 / VKM B-1760 / Hildenborough) (Desulfovibrio vulgaris).